The following is a 428-amino-acid chain: MYTEPFQPTYEYALECDKHDELKDFQTEFYKKEGTIYLDGNSLGLLSKRAEKSLLTLLDSWKEYGIDGWTEGEHPWFFLSEKLGELTAPLIGALPEETIVTGSTTTNIHQVIATFYEPKGIRTKILADELTFPSDIYALQSQIRLKGLDPDEHLVRVKSRDGRTLSEDDIIHAMTDDIALILLPSVLYRSGQVLDMKRLTAEAHKRGIHIGFDLCHSIGSIPHHFKEWDVDFAIWCNYKYLNAGPGGVAGLYVNKKHCNRLPGLSGWFSSRKDKQFDMEHTLTAADHAGAYQIGTPHVLSTAPLIGSLEIFKEAGIERLREKSLHITSYMLNLIAHELSDFEFTIGNPLEDEKRGGHIYLEHAEAARICKALKADGVIPDFRAPNGVRLAPVALYNTYEEVWKSVQILKKIMKDEEYKQFENKREVVA.

Residues T104, T105, 132–135, D213, H216, and Y238 contribute to the pyridoxal 5'-phosphate site; that span reads FPSD. N6-(pyridoxal phosphate)lysine is present on K239. Residues W267 and T295 each coordinate pyridoxal 5'-phosphate.

It belongs to the kynureninase family. Homodimer. The cofactor is pyridoxal 5'-phosphate.

It carries out the reaction L-kynurenine + H2O = anthranilate + L-alanine + H(+). The enzyme catalyses 3-hydroxy-L-kynurenine + H2O = 3-hydroxyanthranilate + L-alanine + H(+). It functions in the pathway amino-acid degradation; L-kynurenine degradation; L-alanine and anthranilate from L-kynurenine: step 1/1. Its pathway is cofactor biosynthesis; NAD(+) biosynthesis; quinolinate from L-kynurenine: step 2/3. Its function is as follows. Catalyzes the cleavage of L-kynurenine (L-Kyn) and L-3-hydroxykynurenine (L-3OHKyn) into anthranilic acid (AA) and 3-hydroxyanthranilic acid (3-OHAA), respectively. The chain is Kynureninase from Bacillus cereus (strain ATCC 10987 / NRS 248).